A 284-amino-acid chain; its full sequence is Bifunctional protein FolD (284 aa).

Residue G166 to S168 participates in NADP(+) binding.

This sequence belongs to the tetrahydrofolate dehydrogenase/cyclohydrolase family. As to quaternary structure, homodimer.

The catalysed reaction is (6R)-5,10-methylene-5,6,7,8-tetrahydrofolate + NADP(+) = (6R)-5,10-methenyltetrahydrofolate + NADPH. It carries out the reaction (6R)-5,10-methenyltetrahydrofolate + H2O = (6R)-10-formyltetrahydrofolate + H(+). It participates in one-carbon metabolism; tetrahydrofolate interconversion. Catalyzes the oxidation of 5,10-methylenetetrahydrofolate to 5,10-methenyltetrahydrofolate and then the hydrolysis of 5,10-methenyltetrahydrofolate to 10-formyltetrahydrofolate. This chain is Bifunctional protein FolD, found in Legionella pneumophila (strain Paris).